We begin with the raw amino-acid sequence, 255 residues long: Ornithine decarboxylase antizyme (255 aa).

The protein belongs to the ODC antizyme family. As to quaternary structure, interacts with ODC and thereby sterically blocks ODC homodimerization.

Its function is as follows. Ornithine decarboxylase (ODC) antizyme protein that negatively regulates ODC activity and intracellular polyamine biosynthesis in response to increased intracellular polyamine levels. Binds to ODC monomers, inhibiting the assembly of the functional ODC homodimer, and targets the monomers for ubiquitin-independent proteolytic destruction by the 26S proteasome. This chain is Ornithine decarboxylase antizyme (OAZ1), found in Candida glabrata (strain ATCC 2001 / BCRC 20586 / JCM 3761 / NBRC 0622 / NRRL Y-65 / CBS 138) (Yeast).